The primary structure comprises 179 residues: MARLQEYYRSTVVQQLMEQFGYKSVMEVPRIRKITLNMGVGEAVADKKIMDNAVGDMQKIAGQKPVVTKARKSIATFKVRDGYPVGCMVTLRRVRMYEFLDRLVNIAIPRIRDFRGISGRSFDGRGNYNMGIKEQIIFPEIEYDKIDALRGMNITITTTAKTDAEAKALLAAFKFPFKN.

The protein belongs to the universal ribosomal protein uL5 family. As to quaternary structure, part of the 50S ribosomal subunit; part of the 5S rRNA/L5/L18/L25 subcomplex. Contacts the 5S rRNA and the P site tRNA. Forms a bridge to the 30S subunit in the 70S ribosome.

This is one of the proteins that bind and probably mediate the attachment of the 5S RNA into the large ribosomal subunit, where it forms part of the central protuberance. In the 70S ribosome it contacts protein S13 of the 30S subunit (bridge B1b), connecting the 2 subunits; this bridge is implicated in subunit movement. Contacts the P site tRNA; the 5S rRNA and some of its associated proteins might help stabilize positioning of ribosome-bound tRNAs. This is Large ribosomal subunit protein uL5 from Nitrosospira multiformis (strain ATCC 25196 / NCIMB 11849 / C 71).